The following is a 467-amino-acid chain: Asparagine--tRNA ligase (467 aa).

It belongs to the class-II aminoacyl-tRNA synthetase family. In terms of assembly, homodimer.

The protein resides in the cytoplasm. The enzyme catalyses tRNA(Asn) + L-asparagine + ATP = L-asparaginyl-tRNA(Asn) + AMP + diphosphate + H(+). The polypeptide is Asparagine--tRNA ligase (Pasteurella multocida (strain Pm70)).